The following is a 75-amino-acid chain: Brevinin-2ISc (75 aa).

The signal sequence occupies residues 1–22 (MFTLKKSLLLLFFLGTISLSLC). Residues 23–40 (EEERDADEDEGEMTEEEV) constitute a propeptide, removed in mature form. A disulfide bond links cysteine 69 and cysteine 75.

In terms of tissue distribution, expressed by the skin glands.

The protein resides in the secreted. In terms of biological role, has antimicrobial activity against Gram-negative bacterium E.coli ATCC 8739 (MIC=50 ug) and against Gram positive bacteria S.aureus ATCC 6538 (MIC=25 ug). Has no activity against methicillin-resistant S.aureus ATCC 43300, B.subtilis ATCC 6633 and against fungus C.albicans ATCC 90028. The chain is Brevinin-2ISc from Odorrana ishikawae (Ishikawa's frog).